We begin with the raw amino-acid sequence, 320 residues long: MSSIRNTHWCHRCQRAVWLRARDAVCSYCGGGFVEEIDIGPSRAHRDVERDPTFDLMEAFSAFMRSRLAERSYDREISGRLGSAGSESFSNLAPLLIFGGQAPFRLAGGDNSSVEAFVNGAAPGIGIARGTNAGDYFFGPGLEELIEQLSSGTHHRGPPPAPKSSIDALPTIKITQKHLKSSDSHCPVCKDEFELKSEAKQMPCHHIYHSDCIVPWLVQHNSCPVCRKELPSRGSSSSTQSSQNRSTNGRENSRRRNIFSNLWPFRSSSSSSTQNRRDTNNTATAEEGHYHHHQQQQQQHQHQHQQQQSHMGYSGWPFDY.

Ser-2 carries the post-translational modification N-acetylserine. The RING-type; atypical zinc finger occupies 186 to 227; that stretch reads CPVCKDEFELKSEAKQMPCHHIYHSDCIVPWLVQHNSCPVCR. The interval 229–320 is disordered; sequence ELPSRGSSSS…MGYSGWPFDY (92 aa). Low complexity-rich tracts occupy residues 232-249 and 295-308; these read SRGS…STNG and QQQQ…QQQQ.

Expressed in seedlings and in flowers.

It catalyses the reaction S-ubiquitinyl-[E2 ubiquitin-conjugating enzyme]-L-cysteine + [acceptor protein]-L-lysine = [E2 ubiquitin-conjugating enzyme]-L-cysteine + N(6)-ubiquitinyl-[acceptor protein]-L-lysine.. Functionally, E3 ubiquitin-protein ligase that promotes osmotic stress and abscisic acid (ABA) responses. Negatively regulates drought-mediated control of early seedling development, probably by influencing proline content, water loss, membrane ion leakage and the expression of dehydration stress-related genes (e.g. RAB18, RD29A, RD29B, AOX1A, ERD15, ERD1, COR15A, P5CS1 and P5CR). Modulates bZIP11 accumulation during rehydration following drought. The chain is E3 ubiquitin-protein ligase RZF1 from Arabidopsis thaliana (Mouse-ear cress).